We begin with the raw amino-acid sequence, 476 residues long: Glycogen synthase (476 aa).

K15 is an ADP-alpha-D-glucose binding site.

The protein belongs to the glycosyltransferase 1 family. Bacterial/plant glycogen synthase subfamily.

The catalysed reaction is [(1-&gt;4)-alpha-D-glucosyl](n) + ADP-alpha-D-glucose = [(1-&gt;4)-alpha-D-glucosyl](n+1) + ADP + H(+). The protein operates within glycan biosynthesis; glycogen biosynthesis. Its function is as follows. Synthesizes alpha-1,4-glucan chains using ADP-glucose. In Halalkalibacterium halodurans (strain ATCC BAA-125 / DSM 18197 / FERM 7344 / JCM 9153 / C-125) (Bacillus halodurans), this protein is Glycogen synthase.